An 83-amino-acid chain; its full sequence is RNA-binding protein Hfq (83 aa).

One can recognise a Sm domain in the interval Asp-9 to Val-68.

Belongs to the Hfq family. As to quaternary structure, homohexamer.

In terms of biological role, RNA chaperone that binds small regulatory RNA (sRNAs) and mRNAs to facilitate mRNA translational regulation in response to envelope stress, environmental stress and changes in metabolite concentrations. Also binds with high specificity to tRNAs. This is RNA-binding protein Hfq from Chromohalobacter salexigens (strain ATCC BAA-138 / DSM 3043 / CIP 106854 / NCIMB 13768 / 1H11).